Here is a 363-residue protein sequence, read N- to C-terminus: uncharacterized protein (363 aa).

ATP is bound at residue 29-36 (GSINSGKT).

Belongs to the archaeal ATPase family.

This is an uncharacterized protein from Methanocaldococcus jannaschii (strain ATCC 43067 / DSM 2661 / JAL-1 / JCM 10045 / NBRC 100440) (Methanococcus jannaschii).